The chain runs to 75 residues: ORF2p protein (75 aa).

The tract at residues 13 to 18 is important for viral replication in intestinal cells; it reads WIGHPV. Positions 23–45 form a transmembrane segment; sequence IVYLFVGFTPLTLETLHTLNYII. The disordered stretch occupies residues 53–75; sequence APRSPHSDPARMRIPTQPRKAPL.

The protein resides in the host cytoplasmic vesicle membrane. Its function is as follows. Facilitates virus release from intestinal cells in vitro, possibly through the host autophagic pathway. The chain is ORF2p protein from Human enterovirus 71 (strain USA/BrCr/1970) (EV71).